The following is a 72-amino-acid chain: Toxin Acra II-3 (72 aa).

Positions 4 to 67 (PGNYPLDTRG…VWNAAKNYCK (64 aa)) constitute an LCN-type CS-alpha/beta domain. 3 cysteine pairs are disulfide-bonded: Cys18–Cys41, Cys27–Cys46, and Cys31–Cys48.

Belongs to the long (3 C-C) scorpion toxin superfamily. Sodium channel inhibitor family. Beta subfamily. In terms of tissue distribution, expressed by the venom gland.

It is found in the secreted. Binds to sodium channels (Nav) and affects the channel activation process. The chain is Toxin Acra II-3 from Androctonus crassicauda (Arabian fat-tailed scorpion).